The sequence spans 225 residues: NAD(P)H-quinone oxidoreductase subunit K, chloroplastic (225 aa).

Residues C43, C44, C108, and C139 each coordinate [4Fe-4S] cluster.

The protein belongs to the complex I 20 kDa subunit family. In terms of assembly, NDH is composed of at least 16 different subunits, 5 of which are encoded in the nucleus. [4Fe-4S] cluster serves as cofactor.

It is found in the plastid. The protein localises to the chloroplast thylakoid membrane. It carries out the reaction a plastoquinone + NADH + (n+1) H(+)(in) = a plastoquinol + NAD(+) + n H(+)(out). The enzyme catalyses a plastoquinone + NADPH + (n+1) H(+)(in) = a plastoquinol + NADP(+) + n H(+)(out). NDH shuttles electrons from NAD(P)H:plastoquinone, via FMN and iron-sulfur (Fe-S) centers, to quinones in the photosynthetic chain and possibly in a chloroplast respiratory chain. The immediate electron acceptor for the enzyme in this species is believed to be plastoquinone. Couples the redox reaction to proton translocation, and thus conserves the redox energy in a proton gradient. The sequence is that of NAD(P)H-quinone oxidoreductase subunit K, chloroplastic from Brachypodium distachyon (Purple false brome).